The sequence spans 506 residues: MTFQNVRVRVAPSPTGDPHVGTAYMALFNEVFARKFNGKMILRIEDTDQTRSRDDYEKNIFSALKWCGIRWDEGPDIGGPYGPYRQSERTEIYKKYAEILLQTDYAYKCFATPQELQEMRAVASTLGYRGGYDRRYRYLSAEEVRQREEQGQPYTIRLKVPLTGESVFEDQCKGRVVFPWADVDDQVLVKSDGFPTYHFANVVDDHLMGITHVLRGEEWLSSTPKHLLLYEAFGWEPPQFFHMPLLLNPDGSKLSKRKNPTSIFYYRDAGYKKEAFMNFLTLMGYSMEGDEEIYSMQRLIEAFDPKRIGRSGAVFDIRKLDWMNKHYLNHEGSPESLLKELKDWLWNDEFLLKILPLCQTRITTLADFIRLTSFFFMAIPEYSKEDLLPSSLGHQQAAVMLYSLVKYLEKKDLWEKDFFYQGSKWLAEAFQVHHKKAVIPLLYVTITGEKQGLPLFDSMELLGKARTRARLTHAQNLLGGVPKKLQQQIDKALQDQPLEEIRFLDF.

Positions 12 to 22 match the 'HIGH' region motif; it reads PSPTGDPHVGT. Residues 253–257 carry the 'KMSKS' region motif; the sequence is KLSKR. Lysine 256 lines the ATP pocket.

Belongs to the class-I aminoacyl-tRNA synthetase family. Glutamate--tRNA ligase type 1 subfamily. As to quaternary structure, monomer.

The protein localises to the cytoplasm. It carries out the reaction tRNA(Glu) + L-glutamate + ATP = L-glutamyl-tRNA(Glu) + AMP + diphosphate. Catalyzes the attachment of glutamate to tRNA(Glu) in a two-step reaction: glutamate is first activated by ATP to form Glu-AMP and then transferred to the acceptor end of tRNA(Glu). The chain is Glutamate--tRNA ligase from Chlamydia muridarum (strain MoPn / Nigg).